Consider the following 206-residue polypeptide: MKTFKFLTALFATAILTACTLDMERPTNVQYIDKTDAIWQQHLQKIQKIQSYQAKGQIGYISPTERFSSRFEWQYQNPKSYTLKLYSLISKSTLLIQMHQSGMTISDNNGNQQSAANAKLLLQEIIGMDVPLEHLAYWLKGQPAMNADYQVGTNHLLGAFTYHVDGSQWTADYLTYHSNNSMPENILLKNDSTKQTLKIRVDEWIY.

The N-terminal stretch at 1–18 is a signal peptide; sequence MKTFKFLTALFATAILTA. Cys19 is lipidated: N-palmitoyl cysteine. The S-diacylglycerol cysteine moiety is linked to residue Cys19.

Belongs to the LolB family. As to quaternary structure, monomer.

It localises to the cell outer membrane. Its function is as follows. Plays a critical role in the incorporation of lipoproteins in the outer membrane after they are released by the LolA protein. This Haemophilus influenzae (strain PittEE) protein is Outer-membrane lipoprotein LolB.